The primary structure comprises 350 residues: Histidinol-phosphate aminotransferase 1 (350 aa).

Lys210 bears the N6-(pyridoxal phosphate)lysine mark.

It belongs to the class-II pyridoxal-phosphate-dependent aminotransferase family. Histidinol-phosphate aminotransferase subfamily. Homodimer. The cofactor is pyridoxal 5'-phosphate.

The enzyme catalyses L-histidinol phosphate + 2-oxoglutarate = 3-(imidazol-4-yl)-2-oxopropyl phosphate + L-glutamate. It participates in amino-acid biosynthesis; L-histidine biosynthesis; L-histidine from 5-phospho-alpha-D-ribose 1-diphosphate: step 7/9. This chain is Histidinol-phosphate aminotransferase 1, found in Pseudomonas fluorescens (strain Pf0-1).